The chain runs to 331 residues: Ferredoxin--NADP reductase 2 (331 aa).

Glu-37, Gln-45, Tyr-50, Val-90, Phe-124, Asp-286, and Thr-327 together coordinate FAD.

It belongs to the ferredoxin--NADP reductase type 2 family. As to quaternary structure, homodimer. FAD serves as cofactor.

It catalyses the reaction 2 reduced [2Fe-2S]-[ferredoxin] + NADP(+) + H(+) = 2 oxidized [2Fe-2S]-[ferredoxin] + NADPH. The sequence is that of Ferredoxin--NADP reductase 2 from Listeria innocua serovar 6a (strain ATCC BAA-680 / CLIP 11262).